A 208-amino-acid chain; its full sequence is Uracil phosphoribosyltransferase (208 aa).

5-phospho-alpha-D-ribose 1-diphosphate-binding positions include Arg-78, Arg-103, and 130–138; that span reads DPMLATGGS. Uracil contacts are provided by residues Ile-193 and 198–200; that span reads GDA. Asp-199 contributes to the 5-phospho-alpha-D-ribose 1-diphosphate binding site.

It belongs to the UPRTase family. It depends on Mg(2+) as a cofactor.

It carries out the reaction UMP + diphosphate = 5-phospho-alpha-D-ribose 1-diphosphate + uracil. It functions in the pathway pyrimidine metabolism; UMP biosynthesis via salvage pathway; UMP from uracil: step 1/1. Its activity is regulated as follows. Allosterically activated by GTP. Its function is as follows. Catalyzes the conversion of uracil and 5-phospho-alpha-D-ribose 1-diphosphate (PRPP) to UMP and diphosphate. The sequence is that of Uracil phosphoribosyltransferase from Mannheimia succiniciproducens (strain KCTC 0769BP / MBEL55E).